We begin with the raw amino-acid sequence, 309 residues long: MPKLSVIVPTFNRQVLLEKAIKSIQNQDFKDLEIIVSDDNSSDDTKSVVQNLQKDDDRIKYFLNQNYKQGPNGNKNNGLDQASGEFVTFLDDDDELLSGALSTLMQKANEGYAHVFGNCLIEKEGNLSKEFSGKGLEKDSEISKKDFLMAKFSGEFFSVFKKSLLENKRFNEEFYGNEATLWVNLYKEKSFYIHKAFRIYRIFRQDSVTLGASKNAYRVYLGYLELAKILENELRMSKDKDYKKTCASYYKMAAYYAKLAKNYKALYKCLFKSLSIKINAPALILLILSIIPNNMIEKLSKIRVALCKN.

Residues 273-291 (SLSIKINAPALILLILSII) form a helical membrane-spanning segment.

It belongs to the glycosyltransferase 2 family.

The protein resides in the membrane. It catalyses the reaction [alpha-D-GalNAc-(1-&gt;4)]4-alpha-D-GalNAc-(1-&gt;3)-alpha-D-diNAcBac-tri-trans,hepta-cis-undecaprenyl diphosphate + UDP-alpha-D-glucose = [alpha-D-GalNAc-(1-&gt;4)]2-[beta-D-Glc-(1-&gt;3)]-[alpha-D-GalNAc-(1-&gt;4)]2-alpha-D-GalNAc-(1-&gt;3)-alpha-D-diNAcBac-tri-trans,hepta-cis-undecaprenyl diphosphate + UDP + H(+). It participates in protein modification; protein glycosylation. In terms of biological role, glucosyltransferase that adds he final branching glucose to complete the final heptasaccharide structure in the N-linked protein glycosylation pathway. In Campylobacter jejuni subsp. jejuni serotype O:2 (strain ATCC 700819 / NCTC 11168), this protein is GalNAc(5)-diNAcBac-PP-undecaprenol beta-1,3-glucosyltransferase (pglI).